The primary structure comprises 373 residues: Zinc finger protein CONSTANS (373 aa).

The B box-type 1; atypical zinc-finger motif lies at 15–57 (NRARPCDTCRSNACTVYCHADSAYLCMSCDAQVHSANRVASRH). Positions 20, 23, 43, 48, 63, 66, 86, and 91 each coordinate Zn(2+). The B box-type 2; atypical zinc finger occupies 58-108 (KRVRVCESCERAPAAFLCEADDASLCTACDSEVHSANPLARRHQRVPILPI). Positions 109-120 (SGNSFSSMTTTH) are enriched in polar residues. Positions 109–130 (SGNSFSSMTTTHHQSEKTMTDP) are disordered. Residues 121–130 (HQSEKTMTDP) show a composition bias toward basic and acidic residues. In terms of domain architecture, CCT spans 306–348 (REARVLRYREKRKTRKFEKTIRYASRKAYAEIRPRVNGRFAKR).

This sequence belongs to the CONSTANS family. As to quaternary structure, interacts with ADO3, SPA1, SPA2, SPA3 and SPA4. Interacts with MRG1 and MRG2 (via MRG domain). Interacts (via B-box) with MIP1A. Interacts with AS1 to form a functional complex regulating FT expression. Interacts with NFYC9. Component of a red light-dependent nuclear complex made of PHL, PHYB and CO. Interacts directly with PHL in the presence of PHYB. In terms of tissue distribution, expressed in leaves, shoots and shoot apical meristem. Detected in the vascular tissue of the hypocotyl, the cotyledons and the leaves. Restricted to the protoxylem and phloem in young inflorescence stems and to the phloem only in older inflorescences. Also detected in the vascular tissue of the root.

Its subcellular location is the nucleus. Transcription factor that acts in the long day flowering pathway and may mediate between the circadian clock and the control of flowering. Plays a role in the regulation of flowering time by acting on 'SUPPRESSOR OF OVEREXPRESSION OF CO1', 'TERMINAL FLOWER 1' and 'FLOWERING LOCUS T'. Also regulates P5CS2 and ACS10 (involved in proline and ethylene biosynthesis, respectively). Regulates the expression of NAKR1 by binding to the 5'-TGTG(N2-3)ATG-3' motif. The chain is Zinc finger protein CONSTANS from Arabidopsis thaliana (Mouse-ear cress).